The sequence spans 141 residues: Nucleoside diphosphate kinase (141 aa).

6 residues coordinate ATP: K9, F57, R85, T91, R102, and N112. H115 acts as the Pros-phosphohistidine intermediate in catalysis.

It belongs to the NDK family. Homotetramer. Requires Mg(2+) as cofactor.

It is found in the cytoplasm. The catalysed reaction is a 2'-deoxyribonucleoside 5'-diphosphate + ATP = a 2'-deoxyribonucleoside 5'-triphosphate + ADP. It catalyses the reaction a ribonucleoside 5'-diphosphate + ATP = a ribonucleoside 5'-triphosphate + ADP. Functionally, major role in the synthesis of nucleoside triphosphates other than ATP. The ATP gamma phosphate is transferred to the NDP beta phosphate via a ping-pong mechanism, using a phosphorylated active-site intermediate. The chain is Nucleoside diphosphate kinase from Prosthecochloris aestuarii (strain DSM 271 / SK 413).